A 389-amino-acid chain; its full sequence is Tryptophan synthase beta chain 1 (389 aa).

An N6-(pyridoxal phosphate)lysine modification is found at Lys-84.

This sequence belongs to the TrpB family. Tetramer of two alpha and two beta chains. It depends on pyridoxal 5'-phosphate as a cofactor.

The protein localises to the plastid. Its subcellular location is the chloroplast. It carries out the reaction (1S,2R)-1-C-(indol-3-yl)glycerol 3-phosphate + L-serine = D-glyceraldehyde 3-phosphate + L-tryptophan + H2O. The protein operates within amino-acid biosynthesis; L-tryptophan biosynthesis; L-tryptophan from chorismate: step 5/5. Functionally, the beta subunit is responsible for the synthesis of L-tryptophan from indole and L-serine. The chain is Tryptophan synthase beta chain 1 (TSB1) from Zea mays (Maize).